Reading from the N-terminus, the 486-residue chain is Arginine/agmatine antiporter (486 aa).

The next 12 helical transmembrane spans lie at 12–32 (LGAIALAGMVISSMIGGGIFS), 41–61 (AGVGAIILAWILTGVGMFFIA), 85–105 (GFGPYIGFTIGWGYWLCQIFG), 132–152 (PAILGGSILIWVFNFIVLKGI), 160–180 (IIGTVGKLVPLIVFIIITAFL), 211–231 (STMLVTLWAFIGIEGAVVMSA), 242–262 (ATILGFTGCLTVYILLSILPF), 296–316 (VGLLIAVLSSWLSWTMIVAEI), 341–361 (VSLYVTSALMQIAMLLVYFST), 367–387 (MLSITGVMVLPAYFASAAFLV), 418–438 (IWLIYAGGLKYLLMAIILLAL), and 461–481 (EVTEITIIAFLALLAIFLFST).

Belongs to the amino acid-polyamine-organocation (APC) superfamily. Basic amino acid/polyamine antiporter (APA) (TC 2.A.3.2) family.

The protein resides in the cell inner membrane. Its function is as follows. Catalyzes the exchange of L-arginine for agmatine. The arginine uptake by the bacterium in the macrophage may be a virulence factor against the host innate immune response. The sequence is that of Arginine/agmatine antiporter (aaxC) from Chlamydia abortus (strain DSM 27085 / S26/3) (Chlamydophila abortus).